A 237-amino-acid polypeptide reads, in one-letter code: Phosphoribosylaminoimidazole-succinocarboxamide synthase (237 aa).

This sequence belongs to the SAICAR synthetase family.

It carries out the reaction 5-amino-1-(5-phospho-D-ribosyl)imidazole-4-carboxylate + L-aspartate + ATP = (2S)-2-[5-amino-1-(5-phospho-beta-D-ribosyl)imidazole-4-carboxamido]succinate + ADP + phosphate + 2 H(+). It functions in the pathway purine metabolism; IMP biosynthesis via de novo pathway; 5-amino-1-(5-phospho-D-ribosyl)imidazole-4-carboxamide from 5-amino-1-(5-phospho-D-ribosyl)imidazole-4-carboxylate: step 1/2. This chain is Phosphoribosylaminoimidazole-succinocarboxamide synthase, found in Klebsiella pneumoniae (strain 342).